We begin with the raw amino-acid sequence, 176 residues long: NAD(P)H-quinone oxidoreductase subunit 6, chloroplastic (176 aa).

The next 5 helical transmembrane spans lie at 10-30, 32-52, 61-81, 90-112, and 152-172; these read ILLV…VLFT, PIYS…FYIP, AQLL…VMFM, FHLW…FSLI, and FYLP…GAIA.

The protein belongs to the complex I subunit 6 family. NDH is composed of at least 16 different subunits, 5 of which are encoded in the nucleus.

Its subcellular location is the plastid. The protein localises to the chloroplast thylakoid membrane. The enzyme catalyses a plastoquinone + NADH + (n+1) H(+)(in) = a plastoquinol + NAD(+) + n H(+)(out). The catalysed reaction is a plastoquinone + NADPH + (n+1) H(+)(in) = a plastoquinol + NADP(+) + n H(+)(out). NDH shuttles electrons from NAD(P)H:plastoquinone, via FMN and iron-sulfur (Fe-S) centers, to quinones in the photosynthetic chain and possibly in a chloroplast respiratory chain. The immediate electron acceptor for the enzyme in this species is believed to be plastoquinone. Couples the redox reaction to proton translocation, and thus conserves the redox energy in a proton gradient. This is NAD(P)H-quinone oxidoreductase subunit 6, chloroplastic (ndhG) from Ceratophyllum demersum (Rigid hornwort).